The sequence spans 1323 residues: Tetratricopeptide repeat protein 21 homolog (1323 aa).

17 TPR repeats span residues 56–89 (VPLAILKGVCLVLLGKIPEAIRHLEAFSNDQNFS), 411–444 (ESPFYYLIASVLAKHSKDKSFENFRQHIENLIEM), 580–613 (SLYHLIKSKTFKKRNENDEALKTLKMALQIPKKE), 667–700 (HQLVIAQAQLYLTKGHTEKALAILRKIQPGQSNF), 702–735 (LSRIRMAEIYLEEKKDKRMFAACYRELLKVEPTP), 736–768 (GSYSLLGDAFMKVQEPEDAINFYEQALKMQSKD), 770–802 (QLAEKIGEAYVMAHLYSKAVNFYESSMNIYKDK), 804–835 (MRLKLANLLLRLKNYEKCEKILRAPLDREPEP), 845–878 (IQFLLLLAECHEMVENIPEAMKDFEKAKSLHNKI), 892–925 (ARICNLQAELYYRRHEFPPAIEVCKQALQFYETD), 927–959 (KSNLLLSRIYKDENKWTLVLQPCQAVLQVDPHN), 961–993 (EANLILADFYYIKSEADHAMTSYITLLNKNPLH), 995–1027 (HALFRVVELYCRKGEHHKADEFLNSARDANPRC), 1031–1064 (AGYSVCRGRFEWYTGDQSQALRCYSRAKDSPNVV), 1203–1236 (EKCWLLMAEIYVGASKWEQAGTYLDQVLKYNCNS), 1238–1270 (RAFELYGQAKEKEQKYVEASKIYEKAFNTTNQK), and 1272–1305 (CSFGYKLAFTLLKTRRLFLCIETCQKVLDINPQY).

The protein belongs to the TTC21 family.

This Caenorhabditis briggsae protein is Tetratricopeptide repeat protein 21 homolog.